The sequence spans 122 residues: MIQTETYLDVADNSGARRVMCIKVLGGSHRRYAGVGDVIKVTVKEAIPRGKVKKGQVMKAVVVRTKKGVRRPDGSLIRFDDNAAVLLNNQEAPVGTRIFGPVTRELRGEKFMKIISLAPEVL.

This sequence belongs to the universal ribosomal protein uL14 family. As to quaternary structure, part of the 50S ribosomal subunit. Forms a cluster with proteins L3 and L19. In the 70S ribosome, L14 and L19 interact and together make contacts with the 16S rRNA in bridges B5 and B8.

In terms of biological role, binds to 23S rRNA. Forms part of two intersubunit bridges in the 70S ribosome. The polypeptide is Large ribosomal subunit protein uL14 (Teredinibacter turnerae (strain ATCC 39867 / T7901)).